A 104-amino-acid chain; its full sequence is DNA-directed RNA polymerase subunit omega (104 aa).

The interval 60–104 (VIHPDPEGKREAVRRRAEEERLRKEEEERKIKEQIAKEKEEGEKI) is disordered. The segment covering 63 to 104 (PDPEGKREAVRRRAEEERLRKEEEERKIKEQIAKEKEEGEKI) has biased composition (basic and acidic residues).

It belongs to the RNA polymerase subunit omega family. As to quaternary structure, the RNAP catalytic core consists of 2 alpha, 1 beta, 1 beta' and 1 omega subunit. When a sigma factor is associated with the core the holoenzyme is formed, which can initiate transcription.

The enzyme catalyses RNA(n) + a ribonucleoside 5'-triphosphate = RNA(n+1) + diphosphate. Its function is as follows. Promotes RNA polymerase assembly. Latches the N- and C-terminal regions of the beta' subunit thereby facilitating its interaction with the beta and alpha subunits. The protein is DNA-directed RNA polymerase subunit omega of Streptococcus sanguinis (strain SK36).